The primary structure comprises 210 residues: Dephospho-CoA kinase (210 aa).

The DPCK domain maps to 4-201 (IVALTGGICS…NFYIYLSKQN (198 aa)). 12–17 (CSGKTT) provides a ligand contact to ATP.

It belongs to the CoaE family.

It localises to the cytoplasm. It catalyses the reaction 3'-dephospho-CoA + ATP = ADP + CoA + H(+). It functions in the pathway cofactor biosynthesis; coenzyme A biosynthesis; CoA from (R)-pantothenate: step 5/5. Functionally, catalyzes the phosphorylation of the 3'-hydroxyl group of dephosphocoenzyme A to form coenzyme A. In Buchnera aphidicola subsp. Schizaphis graminum (strain Sg), this protein is Dephospho-CoA kinase.